A 192-amino-acid chain; its full sequence is UPF0149 protein Spro_3920 (192 aa).

This sequence belongs to the UPF0149 family.

The sequence is that of UPF0149 protein Spro_3920 from Serratia proteamaculans (strain 568).